An 88-amino-acid polypeptide reads, in one-letter code: Small ribosomal subunit protein bS16 (88 aa).

The protein belongs to the bacterial ribosomal protein bS16 family.

This is Small ribosomal subunit protein bS16 from Baumannia cicadellinicola subsp. Homalodisca coagulata.